Consider the following 101-residue polypeptide: Small ribosomal subunit protein uS14 (101 aa).

The protein belongs to the universal ribosomal protein uS14 family. Part of the 30S ribosomal subunit. Contacts proteins S3 and S10.

Its function is as follows. Binds 16S rRNA, required for the assembly of 30S particles and may also be responsible for determining the conformation of the 16S rRNA at the A site. This chain is Small ribosomal subunit protein uS14, found in Neisseria meningitidis serogroup C / serotype 2a (strain ATCC 700532 / DSM 15464 / FAM18).